A 299-amino-acid chain; its full sequence is DNA-binding transcriptional repressor CapW (299 aa).

The segment covering M1–K15 has biased composition (basic and acidic residues). A disordered region spans residues M1–R21. The interval M1–S95 is winged HTH domain. A WYL domain region spans residues L96 to A207. The region spanning L131–E211 is the WYL domain. Residues Y156–R200 are probable ligand-binding region. A WCX domain region spans residues G208–Q299.

As to quaternary structure, homodimer.

Its function is as follows. Transcriptional regulator of a CBASS antivirus system. CBASS (cyclic oligonucleotide-based antiphage signaling system) provides immunity against bacteriophage. The CD-NTase protein synthesizes cyclic nucleotides in response to infection; these serve as specific second messenger signals. The signals activate a diverse range of effectors, leading to bacterial cell death and thus abortive phage infection. A type III CBASS system. Expression of this CBASS system (Cap18-Cap6-Cap7-CdnC-CapW-Cap17) in a susceptible E.coli (strain MG1655) confers resistance to bacteriophage P1. Binds specifically to and represses expression from the CBASS promoter, found between the genes for divergently transcribed capW and cdnC. The chain is DNA-binding transcriptional repressor CapW from Escherichia coli (strain KTE188).